A 1010-amino-acid chain; its full sequence is Pre-mRNA-splicing factor cwc22 (1010 aa).

The segment covering 1–10 has biased composition (polar residues); the sequence is MASADMSPSR. A disordered region spans residues 1 to 166; it reads MASADMSPSR…RTPTPPPVAV (166 aa). Residues 18–28 are compositionally biased toward low complexity; sequence RSPSPRTQSPS. Composition is skewed to basic and acidic residues over residues 29-39 and 65-78; these read PRDEDGSRSPG and PRRD…DQPH. Over residues 84-109 the composition is skewed to low complexity; it reads RSPTPRSQSPSRRSVRSPSPRQGSPA. Positions 142 to 158 are enriched in basic and acidic residues; that stretch reads RHRDAGGDYRPVRKERT. The MIF4G domain occupies 222-405; sequence KKSVNGLVNK…EVLFQVRKDK (184 aa). The segment at 466–498 is disordered; it reads GEASDDDEDDDDDDESESGSESEDEEQKALEIK. The segment covering 468–491 has biased composition (acidic residues); it reads ASDDDEDDDDDDESESGSESEDEE. The MI domain occupies 507–623; the sequence is NLRRTIYLSI…GWHVFSVIHL (117 aa). The tract at residues 708 to 1010 is disordered; the sequence is LPAPPADSDS…SPVAKRGRVD (303 aa). The span at 718–732 shows a compositional bias: low complexity; sequence ESVSSYSSYSSYSSR. Over residues 753–775 the composition is skewed to basic residues; it reads PPRRGRGRSYSRTPSRSRSRSRS. The span at 776-787 shows a compositional bias: low complexity; sequence YSRSVSKSVSRS. 2 stretches are compositionally biased toward basic residues: residues 834–846 and 899–910; these read RRGR…RSRS and RLRRGSYSRSRS. A compositionally biased stretch (low complexity) spans 911–935; it reads RSPIPIRGNGPAGRDTGRAGPAPAR. A compositionally biased stretch (basic residues) spans 936–948; sequence GGRRNRSYSRSRT. Residues 961 to 973 show a composition bias toward low complexity; sequence SRRVVSRSPSPVV. The segment covering 976 to 1010 has biased composition (basic residues); it reads NKRRRSYSSSRSRSRSSSRSRYRSRSPVAKRGRVD.

The protein belongs to the CWC22 family. In terms of assembly, associated with the spliceosome.

Its subcellular location is the cytoplasm. The protein localises to the nucleus. In terms of biological role, involved in pre-mRNA splicing. The protein is Pre-mRNA-splicing factor cwc22 (msp-1) of Neurospora crassa (strain ATCC 24698 / 74-OR23-1A / CBS 708.71 / DSM 1257 / FGSC 987).